A 156-amino-acid polypeptide reads, in one-letter code: Small ribosomal subunit protein uS7 (156 aa).

The protein belongs to the universal ribosomal protein uS7 family. In terms of assembly, part of the 30S ribosomal subunit. Contacts proteins S9 and S11.

Its function is as follows. One of the primary rRNA binding proteins, it binds directly to 16S rRNA where it nucleates assembly of the head domain of the 30S subunit. Is located at the subunit interface close to the decoding center, probably blocks exit of the E-site tRNA. In Cupriavidus necator (strain ATCC 17699 / DSM 428 / KCTC 22496 / NCIMB 10442 / H16 / Stanier 337) (Ralstonia eutropha), this protein is Small ribosomal subunit protein uS7.